The following is a 579-amino-acid chain: XK-related protein 7 (579 aa).

Residues 1–18 (MAAKSDGAAASASPDPEG) show a composition bias toward low complexity. Residues 1 to 40 (MAAKSDGAAASASPDPEGAAGGARGSAGGRGEAAAAAGPP) are disordered. Residues 19–31 (AAGGARGSAGGRG) show a composition bias toward gly residues. Transmembrane regions (helical) follow at residues 59 to 79 (WVLC…WLAA) and 89 to 109 (YFSL…LLSF). Positions 146–165 (GAFRTKEGSPEPGPQPAPSS) are disordered. A run of 5 helical transmembrane segments spans residues 260–280 (LLPA…LASY), 314–334 (GLAF…FIVA), 355–375 (WEEI…WFNV), 384–404 (MTLY…FWYS), and 415–435 (LIMV…MCVY). Residues 466 to 510 (ADAITSPPRSLPRTTGAERDGASAGERAGTPTPPVFQVRPGLPPT) are disordered.

Belongs to the XK family.

Its subcellular location is the cell membrane. In Homo sapiens (Human), this protein is XK-related protein 7.